Reading from the N-terminus, the 341-residue chain is Tryptophan--tRNA ligase (341 aa).

ATP is bound by residues 11–13 (RPT) and 19–20 (GH). A 'HIGH' region motif is present at residues 12-20 (PTGKLHIGH). Residue Asp-140 coordinates L-tryptophan. ATP-binding positions include 152–154 (GED), Leu-193, and 201–205 (KMSKS). The 'KMSKS' region signature appears at 201–205 (KMSKS).

It belongs to the class-I aminoacyl-tRNA synthetase family. As to quaternary structure, homodimer.

It is found in the cytoplasm. The enzyme catalyses tRNA(Trp) + L-tryptophan + ATP = L-tryptophyl-tRNA(Trp) + AMP + diphosphate + H(+). Catalyzes the attachment of tryptophan to tRNA(Trp). The chain is Tryptophan--tRNA ligase from Clostridium longisporum.